We begin with the raw amino-acid sequence, 176 residues long: N-alpha-acetyltransferase 30 (176 aa).

In terms of domain architecture, N-acetyltransferase spans 3–159 (IVYKPLDIRN…DAFKLILPLT (157 aa)).

This sequence belongs to the acetyltransferase family. MAK3 subfamily. Component of the N-terminal acetyltransferase C (NatC) complex, which is composed of MAK3, MAK10 and MAK31.

It is found in the cytoplasm. Its subcellular location is the nucleus. It carries out the reaction N-terminal L-methionyl-L-leucyl-[protein] + acetyl-CoA = N-terminal N(alpha)-acetyl-L-methionyl-L-leucyl-[protein] + CoA + H(+). It catalyses the reaction N-terminal L-methionyl-L-isoleucyl-[protein] + acetyl-CoA = N-terminal N(alpha)-acetyl-L-methionyl-L-isoleucyl-[protein] + CoA + H(+). The catalysed reaction is N-terminal L-methionyl-L-phenylalanyl-[protein] + acetyl-CoA = N-terminal N(alpha)-acetyl-L-methionyl-L-phenylalanyl-[protein] + CoA + H(+). The enzyme catalyses N-terminal L-methionyl-L-tryptophyl-[protein] + acetyl-CoA = N-terminal N(alpha)-acetyl-L-methionyl-L-tryptophyl-[protein] + CoA + H(+). It carries out the reaction N-terminal L-methionyl-L-tyrosyl-[protein] + acetyl-CoA = N-terminal N(alpha)-acetyl-L-methionyl-L-tyrosyl-[protein] + CoA + H(+). Functionally, catalytic component of the NatC N-terminal acetyltransferase, which catalyzes acetylation of the N-terminus Met of L-A virus GAG protein and possibly GRH1. The polypeptide is N-alpha-acetyltransferase 30 (MAK3) (Saccharomyces cerevisiae (strain ATCC 204508 / S288c) (Baker's yeast)).